Consider the following 683-residue polypeptide: Elongation factor G-like protein (683 aa).

The 263-residue stretch at 5–267 folds into the tr-type G domain; the sequence is QNVRSAALIG…YLGDIGVSPE (263 aa). Residues 14–21, 73–77, and 127–130 contribute to the GTP site; these read GHNGSGKS, DTPGF, and NQMD.

Belongs to the TRAFAC class translation factor GTPase superfamily. Classic translation factor GTPase family. EF-G/EF-2 subfamily.

The sequence is that of Elongation factor G-like protein from Thermotoga maritima (strain ATCC 43589 / DSM 3109 / JCM 10099 / NBRC 100826 / MSB8).